A 301-amino-acid polypeptide reads, in one-letter code: MSDLEEVVEEYEEEQEAEEAAAEEEDWREDEDEQEAGEEEEAGGGREAEAETEETQAEEDGQEEEDKEDEDGPVEESKPKPRPFMPNLVPPKIPDGERVDFDDIHRKRMEKDLNELQTLIEAHFENRKKEEEELVSLKDRIEKRRADAEQLRIRAEREKERQNRLAEERARREEEESRRKAEDEARKKKALSNMMHFGGYIQKQAQTERKSGKRQTEREKKKKILAERRKVLAIDHLNEDQLREKAKELWQSIYNLEAEKFDLQEKFKQQKYEINVLRNRINDNQKVSKTRGKAKVTGRWK.

2 stretches are compositionally biased toward acidic residues: residues 1–42 (MSDL…EEEA) and 50–74 (AETEETQAEEDGQEEEDKEDEDGPV). Disordered regions lie at residues 1–99 (MSDL…GERV) and 125–223 (ENRK…KKKK). N-acetylserine is present on serine 2. At serine 2 the chain carries Phosphoserine; by CK2. Residues 82–93 (RPFMPNLVPPKI) are compositionally biased toward pro residues. Composition is skewed to basic and acidic residues over residues 125–186 (ENRK…DEAR) and 206–223 (QTERKSGKRQTEREKKKK). Phosphothreonine; by PKC/PRKCA is present on threonine 207. Serine 211 is modified (phosphoserine; by PKC/PRKCA). Threonine 216 carries the phosphothreonine; by PKC/PRKCA and RAF1 modification. The residue at position 297 (threonine 297) is a Phosphothreonine; by PKC/PRKCA.

The protein belongs to the troponin T family. As to quaternary structure, binds with troponins I and C to make the thin-filament regulatory complex, troponin. In terms of processing, phosphorylation at Thr-216 by PRKCA induces significant reduction in myofilament calcium sensitivity and actomyosin ATPase activity. The major isoform in adult heart is CTNT4.

Functionally, troponin T is the tropomyosin-binding subunit of troponin, the thin filament regulatory complex which confers calcium-sensitivity to striated muscle actomyosin ATPase activity. In Oryctolagus cuniculus (Rabbit), this protein is Troponin T, cardiac muscle (TNNT2).